Here is a 405-residue protein sequence, read N- to C-terminus: Argininosuccinate synthase (405 aa).

ATP-binding positions include 10–18 (AYSGGLDTS) and Ala-37. The L-citrulline site is built by Tyr-88 and Ser-93. Gly-118 contributes to the ATP binding site. Residues Thr-120, Asn-124, and Asp-125 each coordinate L-aspartate. Residue Asn-124 coordinates L-citrulline. The L-citrulline site is built by Arg-128, Ser-179, Ser-188, Glu-264, and Tyr-276.

This sequence belongs to the argininosuccinate synthase family. Type 1 subfamily. In terms of assembly, homotetramer.

It is found in the cytoplasm. The enzyme catalyses L-citrulline + L-aspartate + ATP = 2-(N(omega)-L-arginino)succinate + AMP + diphosphate + H(+). The protein operates within amino-acid biosynthesis; L-arginine biosynthesis; L-arginine from L-ornithine and carbamoyl phosphate: step 2/3. This Pseudomonas entomophila (strain L48) protein is Argininosuccinate synthase.